We begin with the raw amino-acid sequence, 476 residues long: ATP synthase subunit beta (476 aa).

154–161 is a binding site for ATP; sequence GGAGVGKT.

This sequence belongs to the ATPase alpha/beta chains family. As to quaternary structure, F-type ATPases have 2 components, CF(1) - the catalytic core - and CF(0) - the membrane proton channel. CF(1) has five subunits: alpha(3), beta(3), gamma(1), delta(1), epsilon(1). CF(0) has four main subunits: a(1), b(1), b'(1) and c(9-12).

It is found in the cell inner membrane. The enzyme catalyses ATP + H2O + 4 H(+)(in) = ADP + phosphate + 5 H(+)(out). Its function is as follows. Produces ATP from ADP in the presence of a proton gradient across the membrane. The catalytic sites are hosted primarily by the beta subunits. The polypeptide is ATP synthase subunit beta (Rhodopseudomonas palustris (strain BisA53)).